The following is a 159-amino-acid chain: Transcription elongation factor A protein-like 1 (159 aa).

Residues 1-120 (MEKACKEPEE…PQFRGDIHGR (120 aa)) form a disordered region. A compositionally biased stretch (basic and acidic residues) spans 17-34 (KADEERPSVEPSPEKSSP). Residues 37 to 54 (QSSEEVSSEEEFFPDELL) are compositionally biased toward acidic residues. Basic and acidic residues-rich tracts occupy residues 64 to 80 (SEER…DLFE) and 95 to 119 (HKLE…DIHG).

Belongs to the TFS-II family. TFA subfamily.

The protein localises to the nucleus. Functionally, may be involved in transcriptional regulation. Modulates various viral and cellular promoters in a promoter context-dependent manner. Does not bind DNA directly. This is Transcription elongation factor A protein-like 1 from Bos taurus (Bovine).